Reading from the N-terminus, the 154-residue chain is Urease accessory protein UreE (154 aa).

Belongs to the UreE family.

Its subcellular location is the cytoplasm. Involved in urease metallocenter assembly. Binds nickel. Probably functions as a nickel donor during metallocenter assembly. The chain is Urease accessory protein UreE from Escherichia coli O157:H7.